Here is a 353-residue protein sequence, read N- to C-terminus: Lipase-specific foldase (353 aa).

At 1-19 (MAQADRPARGGLAARPMRG) the chain is on the cytoplasmic side. A helical membrane pass occupies residues 20 to 40 (ASFALAGLVACAACAAVVLWL). The Periplasmic segment spans residues 41–353 (RPAAPSPAPA…AASLDRGAGG (313 aa)).

It belongs to the lipase chaperone family. As to quaternary structure, monomer. Interacts with lipase (lip).

It is found in the cell inner membrane. Involved in the folding of the extracellular lipase (lip) during its passage through the periplasm. In Burkholderia plantarii, this protein is Lipase-specific foldase.